The following is a 429-amino-acid chain: [LysW]-aminoadipate semialdehyde transaminase (429 aa).

Pyridoxal 5'-phosphate-binding positions include 112–113 and F139; that span reads GT. R142 is a substrate binding site. 226–229 contributes to the pyridoxal 5'-phosphate binding site; the sequence is DEIQ. At K255 the chain carries N6-(pyridoxal phosphate)lysine. T283 is a binding site for substrate. T284 contacts pyridoxal 5'-phosphate. Positions 408–429 are disordered; the sequence is LRAQQSEMGQQQVSQGESVQTE. The segment covering 411–429 has biased composition (low complexity); it reads QQSEMGQQQVSQGESVQTE.

Belongs to the class-III pyridoxal-phosphate-dependent aminotransferase family. LysJ subfamily. In terms of assembly, homodimer. Requires pyridoxal 5'-phosphate as cofactor.

It is found in the cytoplasm. The enzyme catalyses [amino-group carrier protein]-C-terminal-gamma-(L-lysyl)-L-glutamate + 2-oxoglutarate = [amino-group carrier protein]-C-terminal-N-(1-carboxy-5-oxopentan-1-yl)-L-glutamine + L-glutamate. Its pathway is amino-acid biosynthesis; L-lysine biosynthesis via AAA pathway; L-lysine from L-alpha-aminoadipate (Thermus route): step 4/5. Catalyzes the transfer of the amino group of L-glutamate to [LysW]-aminoadipate 6-semialdehyde, generating [LysW]-gamma-L-lysine. The sequence is that of [LysW]-aminoadipate semialdehyde transaminase from Deinococcus radiodurans (strain ATCC 13939 / DSM 20539 / JCM 16871 / CCUG 27074 / LMG 4051 / NBRC 15346 / NCIMB 9279 / VKM B-1422 / R1).